Here is a 132-residue protein sequence, read N- to C-terminus: Histone H2B.1 (132 aa).

Low complexity predominate over residues methionine 1–alanine 13. The disordered stretch occupies residues methionine 1 to glutamate 40. Lysine 7 is modified (N6-acetyllysine; alternate). Residue lysine 7 forms a Glycyl lysine isopeptide (Lys-Gly) (interchain with G-Cter in SUMO); alternate linkage. Serine 11 is subject to Phosphoserine. Lysine 12 bears the N6-acetyllysine mark. Lysine 17 carries the post-translational modification N6-acetyllysine; alternate. Lysine 17 is covalently cross-linked (Glycyl lysine isopeptide (Lys-Gly) (interchain with G-Cter in SUMO); alternate). Lysine 18 participates in a covalent cross-link: Glycyl lysine isopeptide (Lys-Gly) (interchain with G-Cter in SUMO). A Glycyl lysine isopeptide (Lys-Gly) (interchain with G-Cter in ubiquitin) cross-link involves residue lysine 125.

The protein belongs to the histone H2B family. The nucleosome is a histone octamer containing two molecules each of H2A, H2B, H3 and H4 assembled in one H3-H4 heterotetramer and two H2A-H2B heterodimers. The octamer wraps approximately 147 bp of DNA. Monoubiquitinated by the UBC2-BRE1 complex to form H2BK123ub1. H2BK123ub1 gives a specific tag for epigenetic transcriptional activation and is also prerequisite for H3K4me and H3K79me formation. H2BK123ub1 also modulates the formation of double-strand breaks during meiosis and is a prerequisite for DNA-damage checkpoint activation. Post-translationally, phosphorylated by STE20 to form H2BS10ph during progression through meiotic prophase. May be correlated with chromosome condensation. In terms of processing, acetylated by GCN5 to form H2BK11ac and H2BK16ac. H2BK16ac can also be formed by ESA1. Acetylation of N-terminal lysines and particularly formation of H2BK11acK16ac has a positive effect on transcription. Sumoylation to form H2BK6su and probably also H2BK16su or H2BK17su, occurs preferentially near the telomeres and represses gene transcription.

Its subcellular location is the nucleus. The protein resides in the chromosome. Core component of nucleosome. Nucleosomes wrap and compact DNA into chromatin, limiting DNA accessibility to the cellular machineries which require DNA as a template. Histones thereby play a central role in transcription regulation, DNA repair, DNA replication and chromosomal stability. DNA accessibility is regulated via a complex set of post-translational modifications of histones, also called histone code, and nucleosome remodeling. This Eremothecium gossypii (strain ATCC 10895 / CBS 109.51 / FGSC 9923 / NRRL Y-1056) (Yeast) protein is Histone H2B.1 (HTB1).